A 225-amino-acid polypeptide reads, in one-letter code: GrpE protein homolog 2, mitochondrial (225 aa).

Residues 1 to 32 (MAVRSLWACRLRVQRLLAWSAAWESKGWPLPF) constitute a mitochondrion transit peptide. Lysine 142 is modified (N6-acetyllysine).

The protein belongs to the GrpE family. As to quaternary structure, probable component of the PAM complex at least composed of a mitochondrial HSP70 protein, GRPEL1 or GRPEL2, TIMM44, TIMM16/PAM16 and TIMM14/DNAJC19.

It is found in the mitochondrion matrix. In terms of biological role, essential component of the PAM complex, a complex required for the translocation of transit peptide-containing proteins from the inner membrane into the mitochondrial matrix in an ATP-dependent manner. Seems to control the nucleotide-dependent binding of mitochondrial HSP70 to substrate proteins. Stimulates ATPase activity of mt-HSP70. May also serve to modulate the interconversion of oligomeric (inactive) and monomeric (active) forms of mt-HSP70. In Pongo abelii (Sumatran orangutan), this protein is GrpE protein homolog 2, mitochondrial (GRPEL2).